Here is a 252-residue protein sequence, read N- to C-terminus: RNA-binding protein 2 (252 aa).

Disordered stretches follow at residues 1-34 (MADGFWNRQQQHLPPPGGMLKRPRTEYDTAPSGV) and 232-252 (RLQFSRSPGRRSGGPGPRGKR). One can recognise an RRM domain in the interval 152–238 (STLYVEGLPS…SYLRLQFSRS (87 aa)). Residues 242 to 252 (RSGGPGPRGKR) are compositionally biased toward gly residues.

Its function is as follows. Probable RNA-binding protein. In Medicago truncatula (Barrel medic), this protein is RNA-binding protein 2.